Consider the following 617-residue polypeptide: MDLKTAVFNAARDGKLRLLTKLLASKSKEEVSSLISEKTNGATPLLMAARYGHLDMVEFLLEQCSASIEVGGSVNFDGETIEGAPPLWAASAAGHLKVVQSLLNHGASVNNTTLTNSTPLRAACFDGHLEIVKYLVEHKADLEVSNRHGHTCLMISCYKGHKEIAQYLLEKGADVNRKSVKGNTALHDCAESGSLDIMKMLLMYCAKMEKDGYGMTPLLSASVTGHTNIVDFLTHHAQTSKTERINALELLGATFVDKKRDLLGALKYWKKAMNMRYSDRTNIISKPVPQTLIMAYDYAKEVNSAEELEGLIADPDEMRMQALLIRERILGPSHPDTSYYIRYRGAVYADSGNFKRCINLWKYALDMQQSNLDPLSPMTASSLLSFAELFSFMLQDRAKGLLGTTVTFDDLMGILCKSVLEIERAIKQTQCPADPLQLNKALSIILHLICLLEKVPCTLEQDHFKKQTIYRFLKLHPRGKNNFSPLHLAVDKNTTCVGRYPVCKFPSLQVTAILIECGADVNVRDSDDNSPLHIAALNNHPDIMNLLIKSGAHFDATNLHKQTASDLLDEKEIAKNLIQPINHTTLQCLAARVIVNHRIYYKGHIPEKLETFVSLHR.

An N-acetylmethionine modification is found at Met1. ANK repeat units lie at residues 2–31 (DLKT…KEEV), 40–70 (NGAT…SIEV), 82–111 (EGAP…SVNN), 115–144 (TNST…DLEV), 148–177 (HGHT…DVNR), 181–210 (KGNT…KMEK), and 213–242 (YGMT…TSKT). TPR repeat units lie at residues 245–279 (INAL…RYSD) and 338–371 (SYYI…QQSN). ANK repeat units lie at residues 481-523 (NNFS…DVNV) and 527-556 (DDNS…HFDA).

Belongs to the fem-1 family. Component of a Cul2-RING (CRL2) E3 ubiquitin-protein ligase complex, also named ECS (Elongin BC-CUL2/5-SOCS-box protein) complex, composed of CUL2, Elongin BC (ELOB and ELOC), RBX1 and substrate-specific adapter FEM1C. Widely expressed. Highly expressed in kidney, cardiac tissue, skeletal muscle and testis. Expressed at lower levels in other tissues, including cartilage.

It functions in the pathway protein modification; protein ubiquitination. In terms of biological role, substrate-recognition component of a Cul2-RING (CRL2) E3 ubiquitin-protein ligase complex of the DesCEND (destruction via C-end degrons) pathway, which recognizes a C-degron located at the extreme C terminus of target proteins, leading to their ubiquitination and degradation. The C-degron recognized by the DesCEND pathway is usually a motif of less than ten residues and can be present in full-length proteins, truncated proteins or proteolytically cleaved forms. The CRL2(FEM1C) complex specifically recognizes proteins with an arginine at the C-terminus: recognizes and binds proteins ending with -Lys/Arg-Xaa-Arg and -Lys/Arg-Xaa-Xaa-Arg C-degrons, such as SIL1 or OR51B2, leading to their ubiquitination and degradation. The CRL2(FEM1C) complex mediates ubiquitination and degradation of truncated MSRB1/SEPX1 selenoproteins produced by failed UGA/Sec decoding. Promotes ubiquitination and degradation of SLBP. The polypeptide is Protein fem-1 homolog C (Homo sapiens (Human)).